The following is a 381-amino-acid chain: 4-hydroxy-3-methylbut-2-en-1-yl diphosphate synthase (flavodoxin) (381 aa).

Cys280, Cys283, Cys315, and Glu322 together coordinate [4Fe-4S] cluster.

It belongs to the IspG family. [4Fe-4S] cluster is required as a cofactor.

The catalysed reaction is (2E)-4-hydroxy-3-methylbut-2-enyl diphosphate + oxidized [flavodoxin] + H2O + 2 H(+) = 2-C-methyl-D-erythritol 2,4-cyclic diphosphate + reduced [flavodoxin]. It functions in the pathway isoprenoid biosynthesis; isopentenyl diphosphate biosynthesis via DXP pathway; isopentenyl diphosphate from 1-deoxy-D-xylulose 5-phosphate: step 5/6. In terms of biological role, converts 2C-methyl-D-erythritol 2,4-cyclodiphosphate (ME-2,4cPP) into 1-hydroxy-2-methyl-2-(E)-butenyl 4-diphosphate. This Clavibacter michiganensis subsp. michiganensis (strain NCPPB 382) protein is 4-hydroxy-3-methylbut-2-en-1-yl diphosphate synthase (flavodoxin).